The sequence spans 878 residues: Aconitate hydratase A (878 aa).

Positions 426, 492, and 495 each coordinate [4Fe-4S] cluster.

The protein belongs to the aconitase/IPM isomerase family. As to quaternary structure, monomer. It depends on [4Fe-4S] cluster as a cofactor.

It catalyses the reaction citrate = D-threo-isocitrate. The enzyme catalyses (2S,3R)-3-hydroxybutane-1,2,3-tricarboxylate = 2-methyl-cis-aconitate + H2O. It participates in carbohydrate metabolism; tricarboxylic acid cycle; isocitrate from oxaloacetate: step 2/2. Its pathway is organic acid metabolism; propanoate degradation. Its function is as follows. Involved in the catabolism of short chain fatty acids (SCFA) via the tricarboxylic acid (TCA)(acetyl degradation route) and probably the 2-methylcitrate cycle I (propionate degradation route). Catalyzes the reversible isomerization of citrate to isocitrate via cis-aconitate. Could catalyze the hydration of 2-methyl-cis-aconitate to yield (2R,3S)-2-methylisocitrate. The apo form of AcnA functions as a RNA-binding regulatory protein. This chain is Aconitate hydratase A (acnA), found in Rickettsia conorii (strain ATCC VR-613 / Malish 7).